We begin with the raw amino-acid sequence, 379 residues long: MASSSTSSEEERSLRECERYVQKHNIQQLLKDCIVQLCTARPERPMAYLRDYFEKLELEEAKQMVSQQKSSSRSDSREDEVSPPMNPVVKGRRRRGAISAEVYTEEDATSYVRKVIPKDYKTMAALAKAIEKNVLFAHLDDNERSDIFDAMFSVTYIAGETVIQQGDEGDNFYVIDQGEMDVYVNNEWVTSIGEGGSFGELALIYGTPRAATVRAKTNVKLWGIDRDSYRRILMGSTLRKRKMYEEFLSKVSILESLDKWERLTVADALETVQFEDGQKIVVQGQPGDEFFIILEGSAAVLQRRSENEEFVEVGRLAPSDYFGEIALLMNRPRAATVVARGPLKCVKLDRPRFERVLGPCSDILKRNIQQYNSFVSLSV.

Met1 is modified (N-acetylmethionine). The dimerization and phosphorylation stretch occupies residues 1–134 (MASSSTSSEE…ALAKAIEKNV (134 aa)). The segment at 63-93 (QMVSQQKSSSRSDSREDEVSPPMNPVVKGRR) is disordered. Positions 94–98 (RRGAI) match the Pseudophosphorylation motif motif. 3',5'-cyclic AMP-binding positions include 135–252 (LFAH…SKVS), Glu200, Arg209, 253–379 (ILES…SLSV), Glu324, and Arg333.

It belongs to the cAMP-dependent kinase regulatory chain family. The inactive holoenzyme is composed of two regulatory chains and two catalytic chains. Activation by cAMP releases the two active catalytic monomers and the regulatory dimer. Interacts with PRKACA and PRKACB. Interacts with PRRC1; resulting in PKA activation. The pseudophosphorylation site binds to the substrate-binding region of the catalytic chain, resulting in the inhibition of its activity.

The protein resides in the cell membrane. Functionally, regulatory subunit of the cAMP-dependent protein kinases involved in cAMP signaling in cells. This is cAMP-dependent protein kinase type I-alpha regulatory subunit (prkar1aa) from Danio rerio (Zebrafish).